The sequence spans 503 residues: Catalase (503 aa).

The first 21 residues, Met1 to Ala21, serve as a signal peptide directing secretion. Catalysis depends on residues His72 and Asn145. Tyr353 contributes to the heme binding site.

This sequence belongs to the catalase family. The cofactor is heme.

It is found in the periplasm. The enzyme catalyses 2 H2O2 = O2 + 2 H2O. Decomposes hydrogen peroxide into water and oxygen; serves to protect cells from the toxic effects of hydrogen peroxide. The polypeptide is Catalase (Vibrio cholerae serotype O1 (strain ATCC 39315 / El Tor Inaba N16961)).